Here is a 450-residue protein sequence, read N- to C-terminus: tRNA modification GTPase MnmE (450 aa).

(6S)-5-formyl-5,6,7,8-tetrahydrofolate-binding residues include Arg23, Glu79, and Lys118. The TrmE-type G domain occupies 214 to 374 (GITLILVGKP…LKEHILNKVG (161 aa)). Residue Asn224 coordinates K(+). GTP is bound by residues 224–229 (NAGKSS), 243–249 (TSIAGTT), and 268–271 (DTAG). A Mg(2+)-binding site is contributed by Ser228. K(+) is bound by residues Thr243, Ile245, and Thr248. Thr249 contributes to the Mg(2+) binding site. Position 450 (Lys450) interacts with (6S)-5-formyl-5,6,7,8-tetrahydrofolate.

Belongs to the TRAFAC class TrmE-Era-EngA-EngB-Septin-like GTPase superfamily. TrmE GTPase family. As to quaternary structure, homodimer. Heterotetramer of two MnmE and two MnmG subunits. Requires K(+) as cofactor.

The protein localises to the cytoplasm. Functionally, exhibits a very high intrinsic GTPase hydrolysis rate. Involved in the addition of a carboxymethylaminomethyl (cmnm) group at the wobble position (U34) of certain tRNAs, forming tRNA-cmnm(5)s(2)U34. This Francisella tularensis subsp. tularensis (strain FSC 198) protein is tRNA modification GTPase MnmE.